The sequence spans 393 residues: Probable tRNA sulfurtransferase (393 aa).

Positions 61-168 constitute a THUMP domain; it reads DEVIESLTRV…GDVINIYSIE (108 aa). Residues 186–187, 211–212, R268, G290, and Q299 contribute to the ATP site; these read LL and YF.

Belongs to the ThiI family.

The protein resides in the cytoplasm. It carries out the reaction [ThiI sulfur-carrier protein]-S-sulfanyl-L-cysteine + a uridine in tRNA + 2 reduced [2Fe-2S]-[ferredoxin] + ATP + H(+) = [ThiI sulfur-carrier protein]-L-cysteine + a 4-thiouridine in tRNA + 2 oxidized [2Fe-2S]-[ferredoxin] + AMP + diphosphate. The catalysed reaction is [ThiS sulfur-carrier protein]-C-terminal Gly-Gly-AMP + S-sulfanyl-L-cysteinyl-[cysteine desulfurase] + AH2 = [ThiS sulfur-carrier protein]-C-terminal-Gly-aminoethanethioate + L-cysteinyl-[cysteine desulfurase] + A + AMP + 2 H(+). The protein operates within cofactor biosynthesis; thiamine diphosphate biosynthesis. Its function is as follows. Catalyzes the ATP-dependent transfer of a sulfur to tRNA to produce 4-thiouridine in position 8 of tRNAs, which functions as a near-UV photosensor. Also catalyzes the transfer of sulfur to the sulfur carrier protein ThiS, forming ThiS-thiocarboxylate. This is a step in the synthesis of thiazole, in the thiamine biosynthesis pathway. The sulfur is donated as persulfide by IscS. The chain is Probable tRNA sulfurtransferase from Lachnospira eligens (strain ATCC 27750 / DSM 3376 / VPI C15-48 / C15-B4) (Eubacterium eligens).